Consider the following 400-residue polypeptide: Glutamyl-tRNA reductase (400 aa).

Substrate is bound by residues 45–48 (TCNR), Ser103, 108–110 (EDQ), and Gln114. Cys46 acts as the Nucleophile in catalysis. NADP(+) is bound at residue 179–184 (GYGEIG).

The protein belongs to the glutamyl-tRNA reductase family. As to quaternary structure, homodimer.

It catalyses the reaction (S)-4-amino-5-oxopentanoate + tRNA(Glu) + NADP(+) = L-glutamyl-tRNA(Glu) + NADPH + H(+). It participates in porphyrin-containing compound metabolism; protoporphyrin-IX biosynthesis; 5-aminolevulinate from L-glutamyl-tRNA(Glu): step 1/2. Its function is as follows. Catalyzes the NADPH-dependent reduction of glutamyl-tRNA(Glu) to glutamate 1-semialdehyde (GSA). The sequence is that of Glutamyl-tRNA reductase from Clostridium perfringens (strain 13 / Type A).